Consider the following 129-residue polypeptide: Small ribosomal subunit protein uS11 (129 aa).

The protein belongs to the universal ribosomal protein uS11 family. As to quaternary structure, part of the 30S ribosomal subunit. Interacts with proteins S7 and S18. Binds to IF-3.

Located on the platform of the 30S subunit, it bridges several disparate RNA helices of the 16S rRNA. Forms part of the Shine-Dalgarno cleft in the 70S ribosome. The chain is Small ribosomal subunit protein uS11 from Rhizorhabdus wittichii (strain DSM 6014 / CCUG 31198 / JCM 15750 / NBRC 105917 / EY 4224 / RW1) (Sphingomonas wittichii).